Here is a 443-residue protein sequence, read N- to C-terminus: MSEMTPREIVHELDRHIIGQDKAKRAVAIALRNRWRRMQLPEELRVEVTPKNILMIGPTGVGKTEIARRLAKLANAPFIKVEATKFTEVGYVGKEVETIIRDLTDVAVKMTHQQAMSKVQFRAEELAEDRILDILLPPARDQWGQNEENDTDSSTRQSFRKKLREGKLDDKEIEMDIAAPQMGVEIMAPPGMEDMTNQLQGMFQNLAGNTSKKRKMKIKDAIKAATEEEAAKLVNQEELKEQAIFSVENNGIVFLDEIDKICKRGDSSGPDVSREGVQRDLLPLVEGSTVSTKHGMVKTDHILFVASGAFQMSKPSDLIPELQGRLPIRVELEALTSHDFKRILTEPKASLTEQYKALMATESVNIDFSEDGINKIADAAWQVNERTENIGARRLHTVMERLMEELSFDATDRSDELLIIDEAYVNERLDELVENEDLSRFIL.

ATP contacts are provided by residues isoleucine 18 and glycine 60–glutamate 65. Residues aspartate 141–glutamate 165 are disordered. Positions 256, 321, and 393 each coordinate ATP.

Belongs to the ClpX chaperone family. HslU subfamily. As to quaternary structure, a double ring-shaped homohexamer of HslV is capped on each side by a ring-shaped HslU homohexamer. The assembly of the HslU/HslV complex is dependent on binding of ATP.

It is found in the cytoplasm. Functionally, ATPase subunit of a proteasome-like degradation complex; this subunit has chaperone activity. The binding of ATP and its subsequent hydrolysis by HslU are essential for unfolding of protein substrates subsequently hydrolyzed by HslV. HslU recognizes the N-terminal part of its protein substrates and unfolds these before they are guided to HslV for hydrolysis. This chain is ATP-dependent protease ATPase subunit HslU, found in Photobacterium profundum (strain SS9).